The chain runs to 415 residues: Cysteate synthase (415 aa).

The residue at position 104 (K104) is an N6-(pyridoxal phosphate)lysine. N131 and T376 together coordinate pyridoxal 5'-phosphate.

The protein belongs to the threonine synthase family. Cysteate synthase subfamily. Homotrimer. The cofactor is pyridoxal 5'-phosphate.

The enzyme catalyses O-phospho-L-serine + sulfite + H(+) = L-cysteate + phosphate. It participates in cofactor biosynthesis; coenzyme M biosynthesis. Specifically catalyzes the beta-elimination of phosphate from L-phosphoserine and the beta-addition of sulfite to the dehydroalanine intermediate to produce L-cysteate. This Methanothrix thermoacetophila (strain DSM 6194 / JCM 14653 / NBRC 101360 / PT) (Methanosaeta thermophila) protein is Cysteate synthase.